The sequence spans 223 residues: tRNA (guanine-N(7)-)-methyltransferase (223 aa).

S-adenosyl-L-methionine is bound by residues Asp56, Asp81, Asp108, and Asp130. Residue Asp130 is part of the active site. Residues Lys134 and Asp166 each coordinate substrate.

This sequence belongs to the class I-like SAM-binding methyltransferase superfamily. TrmB family.

The enzyme catalyses guanosine(46) in tRNA + S-adenosyl-L-methionine = N(7)-methylguanosine(46) in tRNA + S-adenosyl-L-homocysteine. Its pathway is tRNA modification; N(7)-methylguanine-tRNA biosynthesis. Its function is as follows. Catalyzes the formation of N(7)-methylguanine at position 46 (m7G46) in tRNA. This Rubrobacter xylanophilus (strain DSM 9941 / JCM 11954 / NBRC 16129 / PRD-1) protein is tRNA (guanine-N(7)-)-methyltransferase.